Here is a 318-residue protein sequence, read N- to C-terminus: Olfactory receptor-like protein COR3 (318 aa).

The Extracellular portion of the chain corresponds to 1-26; the sequence is MASGNCTTPTTFILSGLTDNPGLQMP. N-linked (GlcNAc...) asparagine glycosylation occurs at Asn5. Residues 27–49 traverse the membrane as a helical segment; sequence LFMVFLAIYTITLLTNLGLIRLI. The Cytoplasmic segment spans residues 50-57; the sequence is SVDLHLQT. Residues 58–79 form a helical membrane-spanning segment; sequence PMYIFLQNLSFTDAAYSTVITP. At 80–100 the chain is on the extracellular side; that stretch reads KMLATFLEERKTISYVGCILQ. A disulfide bridge connects residues Cys97 and Cys179. A helical transmembrane segment spans residues 101–120; it reads YFSFVLLTTSECLLLAVMAY. The Cytoplasmic segment spans residues 121–139; the sequence is DRYVAICKPLLYPAIMTKA. The helical transmembrane segment at 140 to 164 threads the bilayer; sequence VCWRLVESLYFLAFLNSLVHTCGLL. Topologically, residues 165–205 are extracellular; it reads KLSFCYSNVVNHFFCDISPLFQISSSSIAISELLVIISGSL. The helical transmembrane segment at 206–226 threads the bilayer; that stretch reads FVMSSIIIILISYVFIILTVV. Residues 227–239 are Cytoplasmic-facing; sequence MIRSKDGKYKAFS. The helical transmembrane segment at 240-260 threads the bilayer; the sequence is TCTSHLMAVSLFHGTVIFMYL. The Extracellular segment spans residues 261–271; sequence RPVKLFSLDTD. The helical transmembrane segment at 272–292 threads the bilayer; that stretch reads KIASLFYTVVIPMLNPLIYSW. Residues 293–318 are Cytoplasmic-facing; it reads RNKEVKDALRRLTATTFGFIDSKAVQ.

Belongs to the G-protein coupled receptor 1 family.

It is found in the cell membrane. Odorant receptor. In Gallus gallus (Chicken), this protein is Olfactory receptor-like protein COR3 (COR3).